We begin with the raw amino-acid sequence, 213 residues long: MRLFLLLITFIALFGAINAFSGVDISQGSSVGDFQCMLNQGFEFAIIRGYMETGQVDPEVVNSIACAREAGVEYVDTYLFPCFNCGNPQDQGPALVNYLSGYNANYGMVWLDIESSDWSGDQSANVAFFEGLISGLQSVGAHIGVYTSASQWIPIMGGYTGGSEFPLWYANWDGVQSFDDFSAFGGWSTPAIKQYNDGGSNCGVGYDFNWYPN.

Positions 1-19 (MRLFLLLITFIALFGAINA) are cleaved as a signal peptide. One can recognise a Ch-type lysozyme domain in the interval 21 to 213 (SGVDISQGSS…VGYDFNWYPN (193 aa)). Active-site residues include Asp-24, Asp-112, and Glu-114.

This sequence belongs to the glycosyl hydrolase 25 family.

It localises to the secreted. It carries out the reaction Hydrolysis of (1-&gt;4)-beta-linkages between N-acetylmuramic acid and N-acetyl-D-glucosamine residues in a peptidoglycan and between N-acetyl-D-glucosamine residues in chitodextrins.. In Dictyostelium discoideum (Social amoeba), this protein is Probable GH family 25 lysozyme 4.